The chain runs to 379 residues: Sensor histidine kinase YhcY (379 aa).

In terms of domain architecture, Histidine kinase spans 185 to 373 (RLAQELHDSV…KLSIRLPLKS (189 aa)). Residue H191 is modified to Phosphohistidine; by autocatalysis.

It catalyses the reaction ATP + protein L-histidine = ADP + protein N-phospho-L-histidine.. Functionally, member of the two-component regulatory system YhcY/YhcZ. Probably activates YhcZ by phosphorylation. This Bacillus subtilis (strain 168) protein is Sensor histidine kinase YhcY (yhcY).